The following is a 495-amino-acid chain: Putative aldehyde dehydrogenase AldA (495 aa).

Position 212-218 (212-218) interacts with NAD(+); that stretch reads GKGSESG. Residues glutamate 256 and cysteine 290 contribute to the active site.

Belongs to the aldehyde dehydrogenase family.

The catalysed reaction is an aldehyde + NAD(+) + H2O = a carboxylate + NADH + 2 H(+). The polypeptide is Putative aldehyde dehydrogenase AldA (aldA) (Staphylococcus aureus (strain bovine RF122 / ET3-1)).